A 384-amino-acid chain; its full sequence is Galactokinase (384 aa).

Substrate is bound at residue 34–37; the sequence is EHTD. 123 to 129 serves as a coordination point for ATP; it reads SSGLSSS. Residues Ser129 and Glu161 each contribute to the Mg(2+) site. The active-site Proton acceptor is Asp173. Tyr222 contacts substrate.

The protein belongs to the GHMP kinase family. GalK subfamily.

The protein resides in the cytoplasm. The enzyme catalyses alpha-D-galactose + ATP = alpha-D-galactose 1-phosphate + ADP + H(+). Its pathway is carbohydrate metabolism; galactose metabolism. Functionally, catalyzes the transfer of the gamma-phosphate of ATP to D-galactose to form alpha-D-galactose-1-phosphate (Gal-1-P). This is Galactokinase from Haemophilus influenzae (strain PittGG).